A 765-amino-acid chain; its full sequence is Probable dipeptidyl peptidase 4 (765 aa).

Positions 1–14 are cleaved as a signal peptide; sequence MKWSILLLVGCAAA. N-linked (GlcNAc...) asparagine glycosylation is found at N35, N78, N101, N110, N169, N218, N465, and N490. Catalysis depends on S613, which acts as the Charge relay system. An N-linked (GlcNAc...) asparagine glycan is attached at N665. Catalysis depends on charge relay system residues D690 and H725.

Belongs to the peptidase S9B family.

Its subcellular location is the secreted. The enzyme catalyses Release of an N-terminal dipeptide, Xaa-Yaa-|-Zaa-, from a polypeptide, preferentially when Yaa is Pro, provided Zaa is neither Pro nor hydroxyproline.. Its function is as follows. Extracellular dipeptidyl-peptidase which removes N-terminal dipeptides sequentially from polypeptides having unsubstituted N-termini provided that the penultimate residue is proline. Contributes to pathogenicity. This Aspergillus fumigatus (strain CBS 144.89 / FGSC A1163 / CEA10) (Neosartorya fumigata) protein is Probable dipeptidyl peptidase 4 (dpp4).